The sequence spans 363 residues: Diheme-cytochrome-encapsulin shell fusion protein (363 aa).

The signal sequence occupies residues 1–36 (MVMGILNTFKKVYAVTGFFALLAVFSLSQVGSSAFA). A diheme c-type cytochrome region spans residues 37–74 (ACAKVDDCFSCHTTQELNAVHKNTPYQGQSCIVCHKAF). Heme is bound by residues Cys44, Cys47, His48, Cys67, Cys70, and His71. A linker region spans residues 75-94 (AADDTCSDAKDGRFAKISSE). The interval 95–363 (ININKEDWNK…KCPQAICTLE (269 aa)) is encapsulin domain.

Belongs to the encapsulin family. Family 1 subfamily. In terms of assembly, the encapsulin nanocompartment is probably formed by 180 monomers, with the N-terminus (diheme domain) inside. There are 36 pores where the pentamers meet as well as 3-fold axis channels and dimer channels. Requires heme as cofactor.

It is found in the encapsulin nanocompartment. Functionally, fusion of the shell and cargo protein of a type 1 encapsulin nanocompartment. Protein missing its signal peptide makes 33 nm particles in E.coli (called cEnc), protein missing its signal peptide and diheme domain (residues 1-86, called Enc) makes 29 nm particles. The cEnc nancompartment encloses c-type heme. The cargo protein NIR-HAO (AC P0DV45) is probably targeted to the nanocompartment by its association with the diheme domain in cEnc; removal of the diheme domain in Enc halves the amount of cargo. This Kuenenia stuttgartiensis protein is Diheme-cytochrome-encapsulin shell fusion protein.